Reading from the N-terminus, the 404-residue chain is tRNA N6-adenosine threonylcarbamoyltransferase, mitochondrial (404 aa).

Residues 1–27 constitute a mitochondrion transit peptide; the sequence is MFQSCLPGALRSWSRGVFSTSTRPRLV. Positions 135 and 139 each coordinate a divalent metal cation. Substrate-binding positions include 157-161, Asp-190, Gly-210, Glu-214, 317-318, and Thr-345; these read LVSGG and SN. Asp-346 contributes to the a divalent metal cation binding site.

The protein belongs to the KAE1 / TsaD family. In terms of assembly, monomer. It depends on a divalent metal cation as a cofactor.

It localises to the mitochondrion. It carries out the reaction L-threonylcarbamoyladenylate + adenosine(37) in tRNA = N(6)-L-threonylcarbamoyladenosine(37) in tRNA + AMP + H(+). Functionally, required for the formation of a threonylcarbamoyl group on adenosine at position 37 (t(6)A37) in mitochondrial tRNAs that read codons beginning with adenine. Probably involved in the transfer of the threonylcarbamoyl moiety of threonylcarbamoyl-AMP (TC-AMP) to the N6 group of A37. Involved in mitochondrial genome maintenance. In Danio rerio (Zebrafish), this protein is tRNA N6-adenosine threonylcarbamoyltransferase, mitochondrial.